Consider the following 482-residue polypeptide: Wax ester synthase/diacylglycerol acyltransferase 9 (482 aa).

The Cytoplasmic portion of the chain corresponds to 1–195; sequence MEKKMKEEEE…FRLVLVVCST (195 aa). His-140 serves as the catalytic Proton acceptor. The helical transmembrane segment at 196 to 216 threads the bilayer; the sequence is VRLIWNTLVDSFLCMATIFFL. The Lumenal portion of the chain corresponds to 217 to 328; the sequence is KDTDTPLKGK…AKGSKCRWGN (112 aa). A helical transmembrane segment spans residues 329–349; sequence YISVILFPFTIALQSDPLVYL. The Cytoplasmic segment spans residues 350–366; sequence SNVKSMIDRKKNSLITY. The chain crosses the membrane as a helical span at residues 367–387; it reads IIYTFSEFVIKAFGINVAVAF. The Lumenal segment spans residues 388-482; sequence QRKIMLNTTM…LEKGLPNHVN (95 aa). Asn-394 carries an N-linked (GlcNAc...) asparagine glycan.

In the N-terminal section; belongs to the long-chain O-acyltransferase family. In terms of tissue distribution, mostly expressed in stems and siliques.

Its subcellular location is the cell membrane. It is found in the endoplasmic reticulum membrane. The enzyme catalyses an acyl-CoA + a 1,2-diacyl-sn-glycerol = a triacyl-sn-glycerol + CoA. It catalyses the reaction a long chain fatty alcohol + a fatty acyl-CoA = a wax ester + CoA. It participates in glycerolipid metabolism; triacylglycerol biosynthesis. It functions in the pathway lipid metabolism. Functionally, bifunctional wax ester synthase/diacylglycerol acyltransferase. Involved in cuticular wax biosynthesis. This Arabidopsis thaliana (Mouse-ear cress) protein is Wax ester synthase/diacylglycerol acyltransferase 9.